We begin with the raw amino-acid sequence, 411 residues long: Putative ion-transport protein YfeO (411 aa).

The next 11 membrane-spanning stretches (helical) occupy residues 9–29 (MLLL…VLIA), 54–74 (DSPF…GLII), 99–119 (ALPG…SLGP), 149–169 (ILAS…AALI), 186–206 (LFAP…FFHP), 223–243 (IASG…AVWC), 258–278 (VLIL…GGPL), 296–316 (LGAG…VIAA), 322–342 (GGRI…LHAH), 343–363 (VEAV…VLVV), and 386–406 (LLCI…LLAA).

Belongs to the chloride channel (TC 2.A.49) family.

It is found in the cell membrane. The polypeptide is Putative ion-transport protein YfeO (Salmonella schwarzengrund (strain CVM19633)).